Here is a 452-residue protein sequence, read N- to C-terminus: Na(+)/H(+) antiporter NhaA (452 aa).

The next 11 membrane-spanning stretches (helical) occupy residues 23-43 (MMLF…LSTI), 71-91 (LLQF…GLEI), 108-128 (LPIV…LLVV), 136-156 (GAAI…AVLG), 165-185 (VFLT…IALF), 189-209 (HINI…YLMG), 216-236 (LGLY…SGIH), 316-336 (IVGY…TLGG), 349-369 (VFLG…YGFV), 385-405 (LMAV…IATL), and 418-438 (EAKL…IVTL).

This sequence belongs to the NhaA Na(+)/H(+) (TC 2.A.33) antiporter family.

Its subcellular location is the cell inner membrane. It catalyses the reaction Na(+)(in) + 2 H(+)(out) = Na(+)(out) + 2 H(+)(in). In terms of biological role, na(+)/H(+) antiporter that extrudes sodium in exchange for external protons. In Porphyromonas gingivalis (strain ATCC BAA-308 / W83), this protein is Na(+)/H(+) antiporter NhaA.